A 184-amino-acid chain; its full sequence is Photosystem I assembly protein Ycf4 (184 aa).

2 helical membrane-spanning segments follow: residues 22–42 (FCWA…GIPS) and 64–84 (IVMC…WCTI).

This sequence belongs to the Ycf4 family.

It is found in the plastid. The protein resides in the chloroplast thylakoid membrane. Functionally, seems to be required for the assembly of the photosystem I complex. The protein is Photosystem I assembly protein Ycf4 of Huperzia lucidula (Shining clubmoss).